Reading from the N-terminus, the 347-residue chain is L-Ala-D/L-amino acid epimerase (347 aa).

156–158 lines the substrate pocket; it reads KLK. Residues Asp-183, Glu-211, and Asp-237 each contribute to the Mg(2+) site. Substrate contacts are provided by residues Lys-259 and 309-311; that span reads DID.

It belongs to the mandelate racemase/muconate lactonizing enzyme family. Mg(2+) serves as cofactor.

In terms of biological role, dipeptide epimerase with a broad substrate specificity. Catalyzes the epimerization of L-Ala-L-Ala, L-Ala-L-Ser, L-Ala-L-Thr, L-Ala-L-Met, L-Ala-L-Phe, L-Ala-L-Tyr, L-Gly-L-Asp, L-Val-L-Asp, L-Val-L-Glu and L-Val-L-Phe (in vitro). Can also catalyze the epimerization of L-Ala-L-Glu, but with lower efficiency. The chain is L-Ala-D/L-amino acid epimerase from Pedosphaera parvula (strain Ellin514).